Reading from the N-terminus, the 474-residue chain is ATP synthase subunit beta (474 aa).

An ATP-binding site is contributed by 151 to 158 (GGAGVGKT).

Belongs to the ATPase alpha/beta chains family. As to quaternary structure, F-type ATPases have 2 components, CF(1) - the catalytic core - and CF(0) - the membrane proton channel. CF(1) has five subunits: alpha(3), beta(3), gamma(1), delta(1), epsilon(1). CF(0) has four main subunits: a(1), b(1), b'(1) and c(9-12).

It localises to the cell inner membrane. It carries out the reaction ATP + H2O + 4 H(+)(in) = ADP + phosphate + 5 H(+)(out). Its function is as follows. Produces ATP from ADP in the presence of a proton gradient across the membrane. The catalytic sites are hosted primarily by the beta subunits. In Jannaschia sp. (strain CCS1), this protein is ATP synthase subunit beta.